The following is a 371-amino-acid chain: D-erythrose-4-phosphate dehydrogenase (371 aa).

Residue 12-13 participates in NAD(+) binding; the sequence is RI. Substrate contacts are provided by residues 154-156, Arg-200, 213-214, and Arg-236; these read SCT and TK. Cys-155 (nucleophile) is an active-site residue. Residue Asn-318 coordinates NAD(+).

This sequence belongs to the glyceraldehyde-3-phosphate dehydrogenase family. Epd subfamily. As to quaternary structure, homotetramer.

It localises to the cytoplasm. It catalyses the reaction D-erythrose 4-phosphate + NAD(+) + H2O = 4-phospho-D-erythronate + NADH + 2 H(+). Its pathway is cofactor biosynthesis; pyridoxine 5'-phosphate biosynthesis; pyridoxine 5'-phosphate from D-erythrose 4-phosphate: step 1/5. Functionally, catalyzes the NAD-dependent conversion of D-erythrose 4-phosphate to 4-phosphoerythronate. In Psychromonas ingrahamii (strain DSM 17664 / CCUG 51855 / 37), this protein is D-erythrose-4-phosphate dehydrogenase.